A 423-amino-acid chain; its full sequence is D-tagatose-1,6-bisphosphate aldolase subunit GatZ (423 aa).

It belongs to the GatZ/KbaZ family. GatZ subfamily. As to quaternary structure, forms a complex with GatY.

It participates in carbohydrate metabolism; D-tagatose 6-phosphate degradation; D-glyceraldehyde 3-phosphate and glycerone phosphate from D-tagatose 6-phosphate: step 2/2. Component of the tagatose-1,6-bisphosphate aldolase GatYZ that is required for full activity and stability of the Y subunit. Could have a chaperone-like function for the proper and stable folding of GatY. When expressed alone, GatZ does not show any aldolase activity. Is involved in the catabolism of galactitol. The polypeptide is D-tagatose-1,6-bisphosphate aldolase subunit GatZ (Salmonella choleraesuis (strain SC-B67)).